The following is a 90-amino-acid chain: Putative sodium channel toxin Ts35 (90 aa).

A signal peptide spans 1 to 22 (QDEVGLGSCSVIFVVGNEEGEA). Residues 23–87 (KDGYAVGGDR…WGNPTLGPCL (65 aa)) form the LCN-type CS-alpha/beta domain. Intrachain disulfides connect Cys-33–Cys-86, Cys-37–Cys-61, Cys-46–Cys-66, and Cys-50–Cys-68.

Belongs to the long (4 C-C) scorpion toxin superfamily. Sodium channel inhibitor family. Expressed by the venom gland.

The protein resides in the secreted. Putative sodium channel toxin. The protein is Putative sodium channel toxin Ts35 of Tityus serrulatus (Brazilian scorpion).